Consider the following 156-residue polypeptide: Small ribosomal subunit protein uS7 (156 aa).

It belongs to the universal ribosomal protein uS7 family. Part of the 30S ribosomal subunit. Contacts proteins S9 and S11.

Functionally, one of the primary rRNA binding proteins, it binds directly to 16S rRNA where it nucleates assembly of the head domain of the 30S subunit. Is located at the subunit interface close to the decoding center, probably blocks exit of the E-site tRNA. The chain is Small ribosomal subunit protein uS7 from Myxococcus xanthus (strain DK1622).